A 236-amino-acid chain; its full sequence is MAKIKPQALLNQSKKKKGPSRISISTIIVCNLVVAVVILSLVTTYRHWSQRSRNTIEHETRSQRFEDTNTASGQKTYDLPGFADINTSKGLITVELFKEGSPEVVDKFLDLCQKDHFKGMPFQRVIKNYLVQAGHSPSSIPVEEWTAKGKLRGRLHIGPKHEAFMLGTPKNKGNNKDFELLITTAPIPDLNDQLIVFGRVLKGEDVVQEIEEVDTDEHFQPKSPIGITGVVLKLET.

A helical; Signal-anchor for type II membrane protein transmembrane segment spans residues 22-42; sequence ISISTIIVCNLVVAVVILSLV. The segment at 52–71 is disordered; it reads SRNTIEHETRSQRFEDTNTA. Basic and acidic residues predominate over residues 54-67; that stretch reads NTIEHETRSQRFED. The PPIase cyclophilin-type domain occupies 82–232; sequence FADINTSKGL…SPIGITGVVL (151 aa). N-linked (GlcNAc...) asparagine glycosylation is present at asparagine 86.

This sequence belongs to the cyclophilin-type PPIase family. Ubiquitous.

Its subcellular location is the membrane. The catalysed reaction is [protein]-peptidylproline (omega=180) = [protein]-peptidylproline (omega=0). PPIases accelerate the folding of proteins. It catalyzes the cis-trans isomerization of proline imidic peptide bonds in oligopeptides. In Arabidopsis thaliana (Mouse-ear cress), this protein is Peptidyl-prolyl cis-trans isomerase CYP21-4 (CYP21-4).